Here is a 433-residue protein sequence, read N- to C-terminus: tRNA-2-methylthio-N(6)-dimethylallyladenosine synthase (433 aa).

The 116-residue stretch at 3-118 (KKLFIQTLGC…ITKAVNTPKF (116 aa)) folds into the MTTase N-terminal domain. The [4Fe-4S] cluster site is built by cysteine 12, cysteine 49, cysteine 81, cysteine 150, cysteine 154, and cysteine 157. Residues 136-369 (RGSPYKSHIN…QNRHSEILDE (234 aa)) form the Radical SAM core domain. The 62-residue stretch at 372–433 (AAQKDKIFDV…RMVLYGELQI (62 aa)) folds into the TRAM domain.

It belongs to the methylthiotransferase family. MiaB subfamily. Monomer. It depends on [4Fe-4S] cluster as a cofactor.

It localises to the cytoplasm. The enzyme catalyses N(6)-dimethylallyladenosine(37) in tRNA + (sulfur carrier)-SH + AH2 + 2 S-adenosyl-L-methionine = 2-methylsulfanyl-N(6)-dimethylallyladenosine(37) in tRNA + (sulfur carrier)-H + 5'-deoxyadenosine + L-methionine + A + S-adenosyl-L-homocysteine + 2 H(+). Functionally, catalyzes the methylthiolation of N6-(dimethylallyl)adenosine (i(6)A), leading to the formation of 2-methylthio-N6-(dimethylallyl)adenosine (ms(2)i(6)A) at position 37 in tRNAs that read codons beginning with uridine. The chain is tRNA-2-methylthio-N(6)-dimethylallyladenosine synthase from Campylobacter concisus (strain 13826).